A 218-amino-acid polypeptide reads, in one-letter code: Large ribosomal subunit protein uL1 (218 aa).

It belongs to the universal ribosomal protein uL1 family. In terms of assembly, part of the 50S ribosomal subunit.

Functionally, binds directly to 23S rRNA. Probably involved in E site tRNA release. Its function is as follows. Protein L1 is also a translational repressor protein, it controls the translation of its operon by binding to its mRNA. This Metallosphaera sedula (strain ATCC 51363 / DSM 5348 / JCM 9185 / NBRC 15509 / TH2) protein is Large ribosomal subunit protein uL1.